We begin with the raw amino-acid sequence, 117 residues long: Modulator protein MzrA (117 aa).

Residues 1–9 (MNSPGLRKP) are Cytoplasmic-facing. The helical transmembrane segment at 10-29 (TIWRPLLLLFPLLALLLSMS) threads the bilayer. At 30 to 117 (SPRLPDEVML…THGTIRVARS (88 aa)) the chain is on the periplasmic side.

It belongs to the MzrA family. Interacts with EnvZ.

The protein resides in the cell inner membrane. Functionally, modulates the activity of the EnvZ/OmpR two-component regulatory system, probably by directly modulating EnvZ enzymatic activity and increasing stability of phosphorylated OmpR. The chain is Modulator protein MzrA from Dickeya zeae (strain Ech586) (Dickeya dadantii (strain Ech586)).